Here is a 645-residue protein sequence, read N- to C-terminus: Translation factor GUF1 homolog, mitochondrial (645 aa).

The tr-type G domain maps to 40-215 (EKIRNFGIVA…AIVERVPAPT (176 aa)). GTP-binding positions include 49–56 (AHVDHGKS), 108–112 (DTPGH), and 162–165 (NKID).

It belongs to the TRAFAC class translation factor GTPase superfamily. Classic translation factor GTPase family. LepA subfamily.

The protein localises to the mitochondrion inner membrane. The enzyme catalyses GTP + H2O = GDP + phosphate + H(+). In terms of biological role, promotes mitochondrial protein synthesis. May act as a fidelity factor of the translation reaction, by catalyzing a one-codon backward translocation of tRNAs on improperly translocated ribosomes. Binds to mitochondrial ribosomes in a GTP-dependent manner. The polypeptide is Translation factor GUF1 homolog, mitochondrial (Caenorhabditis briggsae).